Consider the following 312-residue polypeptide: Acetyl-coenzyme A carboxylase carboxyl transferase subunit alpha (312 aa).

The CoA carboxyltransferase C-terminal domain occupies 36–286; the sequence is RLDKEVKSIY…KEYFLDALRT (251 aa).

Belongs to the AccA family. In terms of assembly, acetyl-CoA carboxylase is a heterohexamer composed of biotin carboxyl carrier protein (AccB), biotin carboxylase (AccC) and two subunits each of ACCase subunit alpha (AccA) and ACCase subunit beta (AccD).

The protein resides in the cytoplasm. It catalyses the reaction N(6)-carboxybiotinyl-L-lysyl-[protein] + acetyl-CoA = N(6)-biotinyl-L-lysyl-[protein] + malonyl-CoA. The protein operates within lipid metabolism; malonyl-CoA biosynthesis; malonyl-CoA from acetyl-CoA: step 1/1. Its function is as follows. Component of the acetyl coenzyme A carboxylase (ACC) complex. First, biotin carboxylase catalyzes the carboxylation of biotin on its carrier protein (BCCP) and then the CO(2) group is transferred by the carboxyltransferase to acetyl-CoA to form malonyl-CoA. The sequence is that of Acetyl-coenzyme A carboxylase carboxyl transferase subunit alpha from Helicobacter pylori (strain J99 / ATCC 700824) (Campylobacter pylori J99).